We begin with the raw amino-acid sequence, 308 residues long: D-alanine--D-alanine ligase (308 aa).

The ATP-grasp domain occupies 106–305 (KMLWKAFGLP…FEQLVVKILE (200 aa)). 136–191 (VEKLGLPLMVKPSLEGSSVGLTKVNAIDDLKSAVEFALQYDETVLIEEWLSGDELT) contacts ATP. Residues aspartate 259, glutamate 272, and asparagine 274 each contribute to the Mg(2+) site.

It belongs to the D-alanine--D-alanine ligase family. Mg(2+) is required as a cofactor. It depends on Mn(2+) as a cofactor.

Its subcellular location is the cytoplasm. The enzyme catalyses 2 D-alanine + ATP = D-alanyl-D-alanine + ADP + phosphate + H(+). The protein operates within cell wall biogenesis; peptidoglycan biosynthesis. Functionally, cell wall formation. The sequence is that of D-alanine--D-alanine ligase from Histophilus somni (strain 2336) (Haemophilus somnus).